Reading from the N-terminus, the 486-residue chain is 2-hydroxymuconic semialdehyde dehydrogenase (486 aa).

Residues Glu254 and Cys288 contribute to the active site.

The protein belongs to the aldehyde dehydrogenase family. In terms of assembly, homodimer.

It catalyses the reaction (2Z,4E)-2-hydroxy-6-oxohexa-2,4-dienoate + NAD(+) + H2O = (2Z,4E)-2-hydroxyhexa-2,4-dienedioate + NADH + 2 H(+). It functions in the pathway aromatic compound metabolism; benzoate degradation via hydroxylation. Its function is as follows. 2-hydroxymuconic acid semialdehyde can be converted to 2-hydroxypent-2,4-dienoate either directly by the action of 2-hydroxymuconic semialdehyde hydrolase (HMSH) or by the action of three sequential enzymes, the first of which is HMSD. Can oxidize not only 2-hydroxymuconic semialdehyde and its analogs but also benzaldehyde and its analogs. This is 2-hydroxymuconic semialdehyde dehydrogenase (xylG) from Pseudomonas putida (Arthrobacter siderocapsulatus).